The following is a 409-amino-acid chain: DNA primase small subunit (409 aa).

Active-site residues include glutamate 46, aspartate 111, and aspartate 113. A Zinc knuckle motif motif is present at residues 123-133; that stretch reads CCSGAQVCSKC.

Belongs to the eukaryotic-type primase small subunit family. As to quaternary structure, DNA polymerase alpha:primase is a four subunit enzyme complex, which is assembled throughout the cell cycle, and consists of the two DNA polymerase subunits A POL1 and B POL12, and the DNA primase large PRI2 and small PRI1 subunits.

Its function is as follows. DNA primase is the polymerase that synthesizes small RNA primers for the Okazaki fragments made during discontinuous DNA replication. In a complex with DNA polymerase alpha (DNA polymerase alpha:primase) constitutes a replicative polymerase. Both primase components participate in formation of the active center, but the ATP-binding site is exclusively located on p48. The chain is DNA primase small subunit (PRI1) from Saccharomyces cerevisiae (strain ATCC 204508 / S288c) (Baker's yeast).